Here is a 485-residue protein sequence, read N- to C-terminus: Alpha-amylase (485 aa).

Positions 1–18 (MFLTSVLILCSLAALSLG) are cleaved as a signal peptide. Residue glutamine 19 is modified to Pyrrolidone carboxylic acid. A disulfide bond links cysteine 46 and cysteine 102. The Ca(2+) site is built by asparagine 116, arginine 164, and aspartate 173. An intrachain disulfide couples cysteine 152 to cysteine 166. Arginine 201 contacts chloride. Aspartate 203 acts as the Nucleophile in catalysis. Histidine 207 serves as a coordination point for Ca(2+). The active-site Proton donor is glutamate 240. Chloride is bound by residues asparagine 303 and arginine 339. A disulfide bridge connects residues cysteine 439 and cysteine 451. An N-linked (GlcNAc...) asparagine glycan is attached at asparagine 448.

This sequence belongs to the glycosyl hydrolase 13 family. As to quaternary structure, monomer. The cofactor is Ca(2+). Chloride serves as cofactor. In terms of tissue distribution, expressed in larval and adult gut.

The protein localises to the secreted. The enzyme catalyses Endohydrolysis of (1-&gt;4)-alpha-D-glucosidic linkages in polysaccharides containing three or more (1-&gt;4)-alpha-linked D-glucose units.. In Phaedon cochleariae (Mustard beetle), this protein is Alpha-amylase.